Consider the following 328-residue polypeptide: tRNA uridine(34) hydroxylase (328 aa).

The region spanning 130 to 224 is the Rhodanese domain; the sequence is LDEDTIVLDT…YGKDPEVQGE (95 aa). The active-site Cysteine persulfide intermediate is the Cys184.

It belongs to the TrhO family.

It carries out the reaction uridine(34) in tRNA + AH2 + O2 = 5-hydroxyuridine(34) in tRNA + A + H2O. Functionally, catalyzes oxygen-dependent 5-hydroxyuridine (ho5U) modification at position 34 in tRNAs. This Streptococcus uberis (strain ATCC BAA-854 / 0140J) protein is tRNA uridine(34) hydroxylase.